We begin with the raw amino-acid sequence, 260 residues long: MIHDPNDAGLPDQLPTPSSEAENSPAGDTTPPEEALHRRRIRSFVTRAGRVSTGQRRAMDELGPRFVVPFAPQQPDWNSVFGREAPRVLEIGFGMGATTAEIASHRPDEDFLGVEVHEPGVGALLKLMGEQNLSNIRIIQHDAVEVLEQMIAPDSLDGVHIFFPDPWHKARHHKRRLIQPKFVALLVSRLKPGAYLHCATDWQNYAEQMLEVLGAEPSLKNTADGYAPRPEYRPVTKFERRGLRLGHGVWDLVFRKRGAG.

The disordered stretch occupies residues 1–37 (MIHDPNDAGLPDQLPTPSSEAENSPAGDTTPPEEALH). Positions 90, 115, 142, and 165 each coordinate S-adenosyl-L-methionine. Aspartate 165 is an active-site residue. Residues lysine 169, aspartate 201, and 236–239 (TKFE) each bind substrate.

The protein belongs to the class I-like SAM-binding methyltransferase superfamily. TrmB family.

The catalysed reaction is guanosine(46) in tRNA + S-adenosyl-L-methionine = N(7)-methylguanosine(46) in tRNA + S-adenosyl-L-homocysteine. The protein operates within tRNA modification; N(7)-methylguanine-tRNA biosynthesis. Functionally, catalyzes the formation of N(7)-methylguanine at position 46 (m7G46) in tRNA. The polypeptide is tRNA (guanine-N(7)-)-methyltransferase (Paraburkholderia xenovorans (strain LB400)).